We begin with the raw amino-acid sequence, 214 residues long: Ribosomal RNA small subunit methyltransferase G (214 aa).

S-adenosyl-L-methionine is bound by residues Gly81, Met86, 132–133, and Arg147; that span reads VE.

It belongs to the methyltransferase superfamily. RNA methyltransferase RsmG family.

It is found in the cytoplasm. The catalysed reaction is guanosine(527) in 16S rRNA + S-adenosyl-L-methionine = N(7)-methylguanosine(527) in 16S rRNA + S-adenosyl-L-homocysteine. Its function is as follows. Specifically methylates the N7 position of guanine in position 527 of 16S rRNA. This is Ribosomal RNA small subunit methyltransferase G from Pseudomonas aeruginosa (strain UCBPP-PA14).